The chain runs to 687 residues: CWF19-like protein 2 homolog (687 aa).

Residues Phe-6–Asp-51 are a coiled coil. A compositionally biased stretch (basic and acidic residues) spans Glu-24 to Ala-50. The tract at residues Glu-24–Asp-281 is disordered. The segment covering Lys-66–Asn-92 has biased composition (basic residues). Positions Ser-93–Phe-107 are enriched in low complexity. Residues Ser-108 to Glu-131 adopt a coiled-coil conformation. Residues Arg-114–Arg-125 show a composition bias toward basic residues. Ser-128 and Ser-130 each carry phosphoserine. Basic and acidic residues-rich tracts occupy residues Val-146–Trp-157 and Phe-168–Glu-180. Positions Lys-290–Glu-325 form a coiled coil. The interval Val-355 to Thr-383 is disordered. Residues Lys-444–Arg-475 adopt a coiled-coil conformation.

This sequence belongs to the CWF19 family.

The polypeptide is CWF19-like protein 2 homolog (Drosophila melanogaster (Fruit fly)).